The sequence spans 356 residues: Probable dual-specificity RNA methyltransferase RlmN (356 aa).

Residue Glu-100 is the Proton acceptor of the active site. The Radical SAM core domain maps to 106 to 340 (TQQRLTVCLS…VSLRASRGLD (235 aa)). Residues Cys-113 and Cys-345 are joined by a disulfide bond. Residues Cys-120, Cys-124, and Cys-127 each contribute to the [4Fe-4S] cluster site. S-adenosyl-L-methionine-binding positions include 167–168 (GE), Ser-197, 226–228 (SLH), and Asn-302. The active-site S-methylcysteine intermediate is the Cys-345.

This sequence belongs to the radical SAM superfamily. RlmN family. Requires [4Fe-4S] cluster as cofactor.

It localises to the cytoplasm. The catalysed reaction is adenosine(2503) in 23S rRNA + 2 reduced [2Fe-2S]-[ferredoxin] + 2 S-adenosyl-L-methionine = 2-methyladenosine(2503) in 23S rRNA + 5'-deoxyadenosine + L-methionine + 2 oxidized [2Fe-2S]-[ferredoxin] + S-adenosyl-L-homocysteine. The enzyme catalyses adenosine(37) in tRNA + 2 reduced [2Fe-2S]-[ferredoxin] + 2 S-adenosyl-L-methionine = 2-methyladenosine(37) in tRNA + 5'-deoxyadenosine + L-methionine + 2 oxidized [2Fe-2S]-[ferredoxin] + S-adenosyl-L-homocysteine. Functionally, specifically methylates position 2 of adenine 2503 in 23S rRNA and position 2 of adenine 37 in tRNAs. The chain is Probable dual-specificity RNA methyltransferase RlmN from Prochlorococcus marinus (strain MIT 9303).